Reading from the N-terminus, the 360-residue chain is Teichoic acids export ATP-binding protein TagH (360 aa).

Residues 24–245 enclose the ABC transporter domain; sequence LKAMFFPKTR…YEDYINWFNK (222 aa). Residue 59–66 participates in ATP binding; it reads GINGSGKS. Residues 246–360 form a unknown region; it reads LSKEEKEAHK…GDIDNSDVSL (115 aa). A disordered region spans residues 270–290; that stretch reads EEQENGKAGSGGDGTQPIVQP.

This sequence belongs to the ABC transporter superfamily. Teichoic acids exporter (TC 3.A.1.104.1) family. In terms of assembly, the complex is composed of two ATP-binding proteins (TagH) and two transmembrane proteins (TagG).

It is found in the cell membrane. The enzyme catalyses ATP + H2O + teichoic acidSide 1 = ADP + phosphate + teichoic acidSide 2.. Part of the ABC transporter complex TagGH involved in teichoic acids export. Responsible for energy coupling to the transport system. This is Teichoic acids export ATP-binding protein TagH from Shouchella clausii (strain KSM-K16) (Alkalihalobacillus clausii).